A 244-amino-acid polypeptide reads, in one-letter code: Deoxynucleotide monophosphate kinase (244 aa).

K10 contacts dGMP. Positions 11, 13, 15, and 16 each coordinate ATP. Residues I36, K37, R70, R137, G144, T145, V149, W157, D180, R182, Q183, E186, and T213 each contribute to the dGMP site.

It belongs to the dNMP kinase family. Homodimer. It depends on Mg(2+) as a cofactor.

It catalyses the reaction dTMP + ATP = dTDP + ADP. It carries out the reaction dGMP + ATP = dGDP + ADP. The enzyme catalyses 5-hydroxymethyl-dCMP + ATP = 5-hydroxymethyl-dCDP + ADP. Functionally, allows the synthesis of deoxyribonucleoside triphosphates necessary for the rapid viral DNA replication. Phosphorylates dGMP, dTMP and 5-hydroxymethyl-dCMP (hmdCMP) while excluding dCMP and dAMP. The phosphorylation of 5-hydroxymethyl-dCMP represents the first step in the replacement of cytosine by hydroxymethylcytosine in new viral DNA genomes. The polypeptide is Deoxynucleotide monophosphate kinase (1) (Escherichia phage RB69 (Bacteriophage RB69)).